A 375-amino-acid polypeptide reads, in one-letter code: Biotin synthase, mitochondrial (375 aa).

The transit peptide at 1–16 (MMSTIYRHLSTARPAL) directs the protein to the mitochondrion. One can recognise a Radical SAM core domain in the interval 81–310 (HDPTKVQLCT…IATARIVMPK (230 aa)). The [4Fe-4S] cluster site is built by cysteine 99, cysteine 103, and cysteine 106. Positions 143, 176, 236, and 314 each coordinate [2Fe-2S] cluster.

It belongs to the radical SAM superfamily. Biotin synthase family. Requires [4Fe-4S] cluster as cofactor. The cofactor is [2Fe-2S] cluster.

Its subcellular location is the mitochondrion. The enzyme catalyses (4R,5S)-dethiobiotin + (sulfur carrier)-SH + 2 reduced [2Fe-2S]-[ferredoxin] + 2 S-adenosyl-L-methionine = (sulfur carrier)-H + biotin + 2 5'-deoxyadenosine + 2 L-methionine + 2 oxidized [2Fe-2S]-[ferredoxin]. The protein operates within cofactor biosynthesis; biotin biosynthesis; biotin from 7,8-diaminononanoate: step 2/2. This Saccharomyces cerevisiae (strain ATCC 204508 / S288c) (Baker's yeast) protein is Biotin synthase, mitochondrial (BIO2).